A 392-amino-acid polypeptide reads, in one-letter code: Iron-sulfur cluster assembly SufBD family protein ML0594 (392 aa).

It belongs to the iron-sulfur cluster assembly SufBD family.

This is Iron-sulfur cluster assembly SufBD family protein ML0594 from Mycobacterium leprae (strain TN).